The sequence spans 408 residues: Putative mannan endo-1,4-beta-mannosidase 4 (408 aa).

A signal peptide spans Met1–Ala23. An N-linked (GlcNAc...) asparagine glycan is attached at Asn73. 2 residues coordinate substrate: Trp85 and Asn201. Residue Glu202 is the Proton donor of the active site. Glu322 acts as the Nucleophile in catalysis. Trp364 contributes to the substrate binding site.

Belongs to the glycosyl hydrolase 5 (cellulase A) family.

It localises to the secreted. It catalyses the reaction Random hydrolysis of (1-&gt;4)-beta-D-mannosidic linkages in mannans, galactomannans and glucomannans.. The protein is Putative mannan endo-1,4-beta-mannosidase 4 (MAN4) of Arabidopsis thaliana (Mouse-ear cress).